The following is a 955-amino-acid chain: Translation initiation factor IF-2 (955 aa).

The tract at residues 49–352 (AFSQSSESTE…QAPSFGGVKI (304 aa)) is disordered. The segment covering 77–88 (PQQQTKASAPSA) has biased composition (low complexity). Composition is skewed to pro residues over residues 95–121 (PAVPKPGPGLKPGPRPVPKPGPRPGPR), 149–159 (RPVPKPGPRPG), 188–202 (RPGPRPHPGMMPPRP), and 209–223 (PPRPQAPRPQAPRPG). Positions 225 to 235 (GTAGGRPGSSA) are enriched in gly residues. A compositionally biased stretch (pro residues) spans 238–264 (PPRPVPRPGPRPSPMNMPASRPTPPGG). A compositionally biased stretch (gly residues) spans 273–322 (SGGGRGRGGGGGAGPRGGGAGGGAPRTGFGGRPGGGRGRGGTAGAFGRPG). Over residues 326–335 (SRSRKSKKQR) the composition is skewed to basic residues. Positions 448 to 620 (PRAPVVTVMG…IILTADAELD (173 aa)) constitute a tr-type G domain. Positions 457–464 (GHVDHGKT) are G1. 457–464 (GHVDHGKT) is a binding site for GTP. The G2 stretch occupies residues 482-486 (GITQH). The tract at residues 507–510 (DTPG) is G3. GTP contacts are provided by residues 507–511 (DTPGH) and 561–564 (NKID). The G4 stretch occupies residues 561–564 (NKID). The segment at 597 to 599 (SAK) is G5.

The protein belongs to the TRAFAC class translation factor GTPase superfamily. Classic translation factor GTPase family. IF-2 subfamily.

The protein resides in the cytoplasm. One of the essential components for the initiation of protein synthesis. Protects formylmethionyl-tRNA from spontaneous hydrolysis and promotes its binding to the 30S ribosomal subunits. Also involved in the hydrolysis of GTP during the formation of the 70S ribosomal complex. In Thermobifida fusca (strain YX), this protein is Translation initiation factor IF-2.